The sequence spans 138 residues: Large ribosomal subunit protein uL16 (138 aa).

The protein belongs to the universal ribosomal protein uL16 family. As to quaternary structure, part of the 50S ribosomal subunit.

Its function is as follows. Binds 23S rRNA and is also seen to make contacts with the A and possibly P site tRNAs. The protein is Large ribosomal subunit protein uL16 of Anaeromyxobacter sp. (strain Fw109-5).